The sequence spans 243 residues: tRNA (guanine-N(1)-)-methyltransferase (243 aa).

S-adenosyl-L-methionine-binding positions include Gly-113 and 133-138; that span reads IGDFVL.

This sequence belongs to the RNA methyltransferase TrmD family. As to quaternary structure, homodimer.

It is found in the cytoplasm. It catalyses the reaction guanosine(37) in tRNA + S-adenosyl-L-methionine = N(1)-methylguanosine(37) in tRNA + S-adenosyl-L-homocysteine + H(+). Specifically methylates guanosine-37 in various tRNAs. The chain is tRNA (guanine-N(1)-)-methyltransferase from Bacillus velezensis (strain DSM 23117 / BGSC 10A6 / LMG 26770 / FZB42) (Bacillus amyloliquefaciens subsp. plantarum).